The chain runs to 427 residues: Enolase 2 (427 aa).

Q165 serves as a coordination point for (2R)-2-phosphoglycerate. E207 (proton donor) is an active-site residue. 3 residues coordinate Mg(2+): D244, E287, and D314. The (2R)-2-phosphoglycerate site is built by K339, R368, S369, and K390. The active-site Proton acceptor is K339.

The protein belongs to the enolase family. In terms of assembly, component of the RNA degradosome, a multiprotein complex involved in RNA processing and mRNA degradation. The cofactor is Mg(2+).

The protein resides in the cytoplasm. It is found in the secreted. It localises to the cell surface. The enzyme catalyses (2R)-2-phosphoglycerate = phosphoenolpyruvate + H2O. Its pathway is carbohydrate degradation; glycolysis; pyruvate from D-glyceraldehyde 3-phosphate: step 4/5. Its function is as follows. Catalyzes the reversible conversion of 2-phosphoglycerate (2-PG) into phosphoenolpyruvate (PEP). It is essential for the degradation of carbohydrates via glycolysis. This is Enolase 2 from Pseudomonas syringae pv. syringae (strain B728a).